Reading from the N-terminus, the 101-residue chain is Small ribosomal subunit protein uS14 (101 aa).

It belongs to the universal ribosomal protein uS14 family. As to quaternary structure, part of the 30S ribosomal subunit. Contacts proteins S3 and S10.

Its function is as follows. Binds 16S rRNA, required for the assembly of 30S particles and may also be responsible for determining the conformation of the 16S rRNA at the A site. In Chromobacterium violaceum (strain ATCC 12472 / DSM 30191 / JCM 1249 / CCUG 213 / NBRC 12614 / NCIMB 9131 / NCTC 9757 / MK), this protein is Small ribosomal subunit protein uS14.